Consider the following 306-residue polypeptide: Pantothenate kinase (306 aa).

Position 91–98 (Gly91–Ser98) interacts with ATP.

Belongs to the prokaryotic pantothenate kinase family.

The protein resides in the cytoplasm. The catalysed reaction is (R)-pantothenate + ATP = (R)-4'-phosphopantothenate + ADP + H(+). It participates in cofactor biosynthesis; coenzyme A biosynthesis; CoA from (R)-pantothenate: step 1/5. The polypeptide is Pantothenate kinase (Streptococcus pneumoniae (strain 70585)).